The sequence spans 95 residues: Co-chaperonin GroES (95 aa).

Belongs to the GroES chaperonin family. As to quaternary structure, heptamer of 7 subunits arranged in a ring. Interacts with the chaperonin GroEL.

The protein resides in the cytoplasm. Its function is as follows. Together with the chaperonin GroEL, plays an essential role in assisting protein folding. The GroEL-GroES system forms a nano-cage that allows encapsulation of the non-native substrate proteins and provides a physical environment optimized to promote and accelerate protein folding. GroES binds to the apical surface of the GroEL ring, thereby capping the opening of the GroEL channel. The sequence is that of Co-chaperonin GroES from Novosphingobium aromaticivorans (strain ATCC 700278 / DSM 12444 / CCUG 56034 / CIP 105152 / NBRC 16084 / F199).